The sequence spans 462 residues: Notoamide biosynthesis cluster protein O' (462 aa).

3 consecutive transmembrane segments (helical) span residues 16–36 (IFNV…WAAM), 55–75 (AVIF…IAKI), and 79–99 (WAFA…YCNV). Asn-102 carries an N-linked (GlcNAc...) asparagine glycan. The next 4 helical transmembrane spans lie at 104-124 (SWYI…FWLT), 143-163 (AYWL…TLGV), 173-193 (ISVQ…FVAA), and 233-253 (ILLL…FSTY). An N-linked (GlcNAc...) asparagine glycan is attached at Asn-254. 4 helical membrane-spanning segments follow: residues 265 to 285 (LSSL…GFFL), 297 to 317 (MAAF…AMVV), 343 to 363 (VYIL…WLIG), and 404 to 424 (AVAV…FVIY). The segment at 443–462 (LQTSGEGSHDIMDANGKSDD) is disordered. The span at 449 to 462 (GSHDIMDANGKSDD) shows a compositional bias: basic and acidic residues.

This sequence belongs to the unc-93 family.

The protein localises to the membrane. Part of the gene cluster that mediates the biosynthesis of notoamide, a fungal indole alkaloid that belongs to a family of natural products containing a characteristic bicyclo[2.2.2]diazaoctane core. The first step of notoamide biosynthesis involves coupling of L-proline and L-tryptophan by the bimodular NRPS notE', to produce cyclo-L-tryptophan-L-proline called brevianamide F. The reverse prenyltransferase notF' then acts as a deoxybrevianamide E synthase and converts brevianamide F to deoxybrevianamide E via reverse prenylation at C-2 of the indole ring leading to the bicyclo[2.2.2]diazaoctane core. Deoxybrevianamide E is further hydroxylated at C-6 of the indole ring, likely catalyzed by the cytochrome P450 monooxygenase notG', to yield 6-hydroxy-deoxybrevianamide E. 6-hydroxy-deoxybrevianamide E is a specific substrate of the prenyltransferase notC' for normal prenylation at C-7 to produce 6-hydroxy-7-prenyl-deoxybrevianamide, also called notoamide S. As the proposed pivotal branching point in notoamide biosynthesis, notoamide S can be diverted to notoamide E through an oxidative pyran ring closure putatively catalyzed by either notH' cytochrome P450 monooxygenase or the notD' FAD-linked oxidoreductase. This step would be followed by an indole 2,3-epoxidation-initiated pinacol-like rearrangement catalyzed by the notB' FAD-dependent monooxygenase leading to the formation of notoamide C and notoamide D. On the other hand notoamide S is converted to notoamide T by notH' (or notD'), a bifunctional oxidase that also functions as the intramolecular Diels-Alderase responsible for generation of (-)-notoamide T. To generate antipodal (+)-notoaminide T, notH (or notD) in Aspergillus strain MF297-2 is expected to catalyze a Diels-Alder reaction leading to the opposite stereochemistry. The remaining oxidoreductase notD' (or notH') likely catalyzes the oxidative pyran ring formation to yield (-)-stephacidin A. The FAD-dependent monooxygenase notI' is highly similar to notB' and is predicted to catalyze a similar conversion from (-)-stephacidin A to (+)-notoamide B via the 2,3-epoxidation of (-)-stephacidin A followed by a pinacol-type rearrangement. Finally, it remains unclear which enzyme could be responsible for the final hydroxylation steps leading to notoamide A and sclerotiamide. The function of notO' in the notoamide biosynthesis has not been determined yet. The protein is Notoamide biosynthesis cluster protein O' of Aspergillus versicolor.